The chain runs to 239 residues: Fatty acid metabolism regulator protein (239 aa).

The HTH gntR-type domain maps to 6-74 (KGPASFAEKY…HGKPTQVNNF (69 aa)). The H-T-H motif DNA-binding region spans 34 to 53 (ERELSELIGVTRTTLREVLQ).

Homodimer.

Its subcellular location is the cytoplasm. Its function is as follows. Multifunctional regulator of fatty acid metabolism. In Shewanella denitrificans (strain OS217 / ATCC BAA-1090 / DSM 15013), this protein is Fatty acid metabolism regulator protein.